Reading from the N-terminus, the 218-residue chain is Protein-L-isoaspartate O-methyltransferase (218 aa).

Ser-52 is a catalytic residue.

It belongs to the methyltransferase superfamily. L-isoaspartyl/D-aspartyl protein methyltransferase family.

Its subcellular location is the cytoplasm. It catalyses the reaction [protein]-L-isoaspartate + S-adenosyl-L-methionine = [protein]-L-isoaspartate alpha-methyl ester + S-adenosyl-L-homocysteine. Functionally, catalyzes the methyl esterification of L-isoaspartyl residues in peptides and proteins that result from spontaneous decomposition of normal L-aspartyl and L-asparaginyl residues. It plays a role in the repair and/or degradation of damaged proteins. The protein is Protein-L-isoaspartate O-methyltransferase of Rhodopseudomonas palustris (strain ATCC BAA-98 / CGA009).